The chain runs to 186 residues: TATA-box-binding protein B (186 aa).

Repeat copies occupy residues 10 to 86 (IENV…FGDI) and 101 to 179 (VQNI…QDRL).

The protein belongs to the TBP family.

Its function is as follows. General factor that plays a role in the activation of archaeal genes transcribed by RNA polymerase. Binds specifically to the TATA box promoter element which lies close to the position of transcription initiation. The chain is TATA-box-binding protein B (tbpB1) from Halobacterium salinarum (strain ATCC 700922 / JCM 11081 / NRC-1) (Halobacterium halobium).